A 258-amino-acid chain; its full sequence is Alpha-fibrinogenase-like (258 aa).

The N-terminal stretch at 1–18 (MVLIRVLANLLVLQLSYA) is a signal peptide. Residues 19–24 (QKSSEL) constitute a propeptide that is removed on maturation. Residues 25–249 (VVGGHPCNIY…YTDWIHSIIA (225 aa)) enclose the Peptidase S1 domain. Cystine bridges form between Cys31-Cys163, Cys50-Cys66, Cys98-Cys256, Cys142-Cys210, Cys174-Cys189, and Cys200-Cys225. Asn44 is a glycosylation site (N-linked (GlcNAc...) asparagine). Active-site charge relay system residues include His65 and Asp110. Ser204 functions as the Charge relay system in the catalytic mechanism.

The protein belongs to the peptidase S1 family. Snake venom subfamily. Monomer. In terms of tissue distribution, expressed by the venom gland.

It is found in the secreted. Functionally, degrades alpha chain of fibrinogen (FGA), and has strong caseinolytic activity. Cleaves oxidized insulin B-chain at '40-Tyr-|-Leu-41', '48-Phe-|-Phe-49' and '49-Phe-|-Tyr-50', and glucagon at the bonds '62-Tyr-|-Ser-63', 66-Leu-|-Asp-67' and '78-Leu-|-Met-79' bonds. The polypeptide is Alpha-fibrinogenase-like (Daboia siamensis (Eastern Russel's viper)).